Consider the following 298-residue polypeptide: Chitin deacetylase (298 aa).

The N-terminal stretch at 1-16 is a signal peptide; it reads MLAPLFAALLAGAATA. In terms of domain architecture, NodB homology spans 39-222; the sequence is NTFALTFDDG…AIKAKGLTPV (184 aa). D46 acts as the Proton acceptor in catalysis. Position 46 (D46) interacts with acetate. D47, H99, and H103 together coordinate Co(2+). Y140 is an acetate binding site. Catalysis depends on H196, which acts as the Proton donor. The region spanning 256–298 is the Chitin-binding type-1 domain; the sequence is DDTCGGSNGYVCQNSQCCSQWGWCGTTSEYCAAGCQAAYGPCT. Disulfide bonds link C259–C273, C267–C279, C272–C286, and C290–C297.

The protein belongs to the polysaccharide deacetylase family. Co(2+) is required as a cofactor.

It is found in the secreted. It carries out the reaction [(1-&gt;4)-N-acetyl-beta-D-glucosaminyl](n) + n H2O = chitosan + n acetate. Its activity is regulated as follows. Inhibited by Fe(2+) and to a lesser extent by Mn(2+). Hydrolyzes the N-acetamido groups of N-acetyl-D-glucosamine polymers in chitin to form chitosan and acetate. May play a role in evasion of the host immune response; plant chitinases liberate chitin molecules from the fungal cell wall which act as elicitors of the plant immune response, deacetylation of the liberated chitin neutralizes elicitor activity. The protein is Chitin deacetylase of Pestalotiopsis sp.